We begin with the raw amino-acid sequence, 289 residues long: ATP synthase gamma chain (289 aa).

It belongs to the ATPase gamma chain family. As to quaternary structure, F-type ATPases have 2 components, CF(1) - the catalytic core - and CF(0) - the membrane proton channel. CF(1) has five subunits: alpha(3), beta(3), gamma(1), delta(1), epsilon(1). CF(0) has three main subunits: a, b and c.

It localises to the cell inner membrane. In terms of biological role, produces ATP from ADP in the presence of a proton gradient across the membrane. The gamma chain is believed to be important in regulating ATPase activity and the flow of protons through the CF(0) complex. The protein is ATP synthase gamma chain of Acinetobacter baumannii (strain AB307-0294).